A 614-amino-acid chain; its full sequence is Sodium- and chloride-dependent betaine transporter (614 aa).

Over 1–44 (MDGKVAVQECGPPAVSWVPEEGEKLDQEDEDQVKDRGQWTNKME) the chain is Cytoplasmic. 3 helical membrane passes run 45-65 (FVLS…FPYL), 73-92 (AFFI…VFFL), and 117-137 (GIGL…IIIL). Residues 138–210 (AWALFYLFSS…SGIHDLGSLR (73 aa)) are Extracellular-facing. A disulfide bridge connects residues Cys157 and Cys166. 2 N-linked (GlcNAc...) asparagine glycosylation sites follow: Asn171 and Asn183. 9 helical membrane-spanning segments follow: residues 211–229 (WELA…FCIW), 238–255 (VVYF…ILLI), 291–308 (IFFS…LGSY), 320–341 (IALC…FSIL), 374–393 (MPLS…FLGL), 423–441 (LLIL…FLVT), 458–478 (GICL…VYGA), 499–518 (ISWL…FSLS), and 538–556 (IGWF…FVVI). Over 557–614 (TLLKTRGPFRKRLRQLITPDSSLPQPKQHPCLDGSAGRNFGPSPTREGLIAGEKETHL) the chain is Cytoplasmic. The interval 576 to 614 (DSSLPQPKQHPCLDGSAGRNFGPSPTREGLIAGEKETHL) is disordered.

Belongs to the sodium:neurotransmitter symporter (SNF) (TC 2.A.22) family. SLC6A12 subfamily. As to quaternary structure, interacts with LIN7C. Expressed in kidney, liver, heart, skeletal muscle, placenta, and a widespread distribution in the brain.

It is found in the basolateral cell membrane. The protein localises to the cell membrane. The catalysed reaction is 4-aminobutanoate(out) + chloride(out) + 3 Na(+)(out) = 4-aminobutanoate(in) + chloride(in) + 3 Na(+)(in). The enzyme catalyses glycine betaine(out) + 2 chloride(out) + 3 Na(+)(out) = glycine betaine(in) + 2 chloride(in) + 3 Na(+)(in). Its function is as follows. Transporter that mediates cellular uptake of betaine and GABA in a sodium- and chloride-dependent process. May have a role in regulation of GABAergic transmission in the brain through the reuptake of GABA into presynaptic terminals, as well as in osmotic regulation. Probably also involved in renal and hepatic osmotic regulation. The chain is Sodium- and chloride-dependent betaine transporter from Homo sapiens (Human).